A 335-amino-acid chain; its full sequence is Acetyl-coenzyme A carboxylase carboxyl transferase subunit alpha (335 aa).

A CoA carboxyltransferase C-terminal domain is found at 48–308 (TLEKKVEALR…KGILIEELSA (261 aa)).

The protein belongs to the AccA family. In terms of assembly, acetyl-CoA carboxylase is a heterohexamer composed of biotin carboxyl carrier protein (AccB), biotin carboxylase (AccC) and two subunits each of ACCase subunit alpha (AccA) and ACCase subunit beta (AccD).

Its subcellular location is the cytoplasm. It carries out the reaction N(6)-carboxybiotinyl-L-lysyl-[protein] + acetyl-CoA = N(6)-biotinyl-L-lysyl-[protein] + malonyl-CoA. It functions in the pathway lipid metabolism; malonyl-CoA biosynthesis; malonyl-CoA from acetyl-CoA: step 1/1. Component of the acetyl coenzyme A carboxylase (ACC) complex. First, biotin carboxylase catalyzes the carboxylation of biotin on its carrier protein (BCCP) and then the CO(2) group is transferred by the carboxyltransferase to acetyl-CoA to form malonyl-CoA. This chain is Acetyl-coenzyme A carboxylase carboxyl transferase subunit alpha, found in Chlorobium phaeovibrioides (strain DSM 265 / 1930) (Prosthecochloris vibrioformis (strain DSM 265)).